The sequence spans 301 residues: Ribonuclease Z (301 aa).

The Zn(2+) site is built by histidine 63, histidine 65, aspartate 67, histidine 68, histidine 141, aspartate 204, and histidine 262. The Proton acceptor role is filled by aspartate 67.

Belongs to the RNase Z family. Homodimer. Zn(2+) is required as a cofactor.

The enzyme catalyses Endonucleolytic cleavage of RNA, removing extra 3' nucleotides from tRNA precursor, generating 3' termini of tRNAs. A 3'-hydroxy group is left at the tRNA terminus and a 5'-phosphoryl group is left at the trailer molecule.. Its function is as follows. Zinc phosphodiesterase, which displays some tRNA 3'-processing endonuclease activity. Probably involved in tRNA maturation, by removing a 3'-trailer from precursor tRNA. This Streptomyces coelicolor (strain ATCC BAA-471 / A3(2) / M145) protein is Ribonuclease Z.